A 250-amino-acid chain; its full sequence is Probable transcriptional regulatory protein SCO1521 (250 aa).

It belongs to the TACO1 family.

The protein localises to the cytoplasm. This is Probable transcriptional regulatory protein SCO1521 from Streptomyces coelicolor (strain ATCC BAA-471 / A3(2) / M145).